Consider the following 415-residue polypeptide: Carbamoyl phosphate synthase arginine-specific small chain (415 aa).

The N-terminal 17 residues, 1 to 17 (MLRFLKPFPLRFGKRFY), are a transit peptide targeting the mitochondrion. L-glutamine is bound by residues S88, G272, and G274. The region spanning 225-412 (NIAVIDCGVK…IKEAIKYQKS (188 aa)) is the Glutamine amidotransferase type-1 domain. C301 (nucleophile) is an active-site residue. L-glutamine is bound by residues M302, Q305, N343, G345, and Y346. Catalysis depends on residues H385 and E387.

It belongs to the CarA family. In terms of assembly, heterodimer composed of 2 chains; the small (or glutamine) chain promotes the hydrolysis of glutamine to ammonia, which is used by the large (or ammonia) chain to synthesize carbamoyl phosphate.

The protein resides in the mitochondrion. Its subcellular location is the cytoplasm. The enzyme catalyses hydrogencarbonate + L-glutamine + 2 ATP + H2O = carbamoyl phosphate + L-glutamate + 2 ADP + phosphate + 2 H(+). The catalysed reaction is L-glutamine + H2O = L-glutamate + NH4(+). The protein operates within amino-acid biosynthesis; L-arginine biosynthesis; carbamoyl phosphate from bicarbonate: step 1/1. Small subunit of the arginine-specific carbamoyl phosphate synthase (CPSase). CPSase catalyzes the formation of carbamoyl phosphate from the ammonia moiety of glutamine, carbonate, and phosphate donated by ATP, the first step of the arginine biosynthetic pathway. The small subunit (glutamine amidotransferase) binds and cleaves glutamine to supply the large subunit with the substrate ammonia. The polypeptide is Carbamoyl phosphate synthase arginine-specific small chain (arg5) (Schizosaccharomyces pombe (strain 972 / ATCC 24843) (Fission yeast)).